A 347-amino-acid chain; its full sequence is Heat-inducible transcription repressor HrcA (347 aa).

Belongs to the HrcA family.

Functionally, negative regulator of class I heat shock genes (grpE-dnaK-dnaJ and groELS operons). Prevents heat-shock induction of these operons. The chain is Heat-inducible transcription repressor HrcA from Rhodococcus jostii (strain RHA1).